Here is a 130-residue protein sequence, read N- to C-terminus: Small ribosomal subunit protein uS8 (130 aa).

Belongs to the universal ribosomal protein uS8 family. Part of the 30S ribosomal subunit. Contacts proteins S5 and S12.

Its function is as follows. One of the primary rRNA binding proteins, it binds directly to 16S rRNA central domain where it helps coordinate assembly of the platform of the 30S subunit. This is Small ribosomal subunit protein uS8 from Pseudoalteromonas translucida (strain TAC 125).